A 345-amino-acid polypeptide reads, in one-letter code: Phenylalanine--tRNA ligase alpha subunit (345 aa).

Glutamate 272 provides a ligand contact to Mg(2+).

It belongs to the class-II aminoacyl-tRNA synthetase family. Phe-tRNA synthetase alpha subunit type 1 subfamily. As to quaternary structure, tetramer of two alpha and two beta subunits. It depends on Mg(2+) as a cofactor.

It localises to the cytoplasm. It catalyses the reaction tRNA(Phe) + L-phenylalanine + ATP = L-phenylalanyl-tRNA(Phe) + AMP + diphosphate + H(+). The polypeptide is Phenylalanine--tRNA ligase alpha subunit (Prochlorococcus marinus (strain MIT 9312)).